Reading from the N-terminus, the 62-residue chain is Protein DsrB (62 aa).

Belongs to the DsrB family.

The chain is Protein DsrB from Citrobacter koseri (strain ATCC BAA-895 / CDC 4225-83 / SGSC4696).